The chain runs to 282 residues: Lipoyl synthase (282 aa).

The [4Fe-4S] cluster site is built by C37, C42, C48, C63, C67, C70, and S274. A Radical SAM core domain is found at 49 to 263 (WGKGTATFMI…KTIGLEKGFS (215 aa)).

The protein belongs to the radical SAM superfamily. Lipoyl synthase family. [4Fe-4S] cluster serves as cofactor.

It is found in the cytoplasm. It carries out the reaction [[Fe-S] cluster scaffold protein carrying a second [4Fe-4S](2+) cluster] + N(6)-octanoyl-L-lysyl-[protein] + 2 oxidized [2Fe-2S]-[ferredoxin] + 2 S-adenosyl-L-methionine + 4 H(+) = [[Fe-S] cluster scaffold protein] + N(6)-[(R)-dihydrolipoyl]-L-lysyl-[protein] + 4 Fe(3+) + 2 hydrogen sulfide + 2 5'-deoxyadenosine + 2 L-methionine + 2 reduced [2Fe-2S]-[ferredoxin]. It participates in protein modification; protein lipoylation via endogenous pathway; protein N(6)-(lipoyl)lysine from octanoyl-[acyl-carrier-protein]: step 2/2. Functionally, catalyzes the radical-mediated insertion of two sulfur atoms into the C-6 and C-8 positions of the octanoyl moiety bound to the lipoyl domains of lipoate-dependent enzymes, thereby converting the octanoylated domains into lipoylated derivatives. The protein is Lipoyl synthase of Bacteroides thetaiotaomicron (strain ATCC 29148 / DSM 2079 / JCM 5827 / CCUG 10774 / NCTC 10582 / VPI-5482 / E50).